The primary structure comprises 472 residues: Arabinose-proton symporter (472 aa).

Over 1-29 (MVTINTESALTPRSLRDTRRMNMFVSVAA) the chain is Cytoplasmic. The chain crosses the membrane as a helical span at residues 30–50 (AVAGLLFGLDIGVIAGALPFI). The Periplasmic portion of the chain corresponds to 51–63 (TDHFVLTSRLQEW). A helical transmembrane segment spans residues 64–84 (VVSSMMLGAAIGALFNGWLSF). Residues 85–91 (RLGRKYS) are Cytoplasmic-facing. The chain crosses the membrane as a helical span at residues 92 to 112 (LMAGAILFVLGSIGSAFATSV). At 113–114 (EM) the chain is on the periplasmic side. Residues 115–135 (LIAARVVLGIAVGIASYTAPL) form a helical membrane-spanning segment. The Cytoplasmic segment spans residues 136-154 (YLSEMASENVRGKMISMYQ). The helical transmembrane segment at 155–175 (LMVTLGIVLAFLSDTAFSYSG) threads the bilayer. Residues 176–178 (NWR) are Periplasmic-facing. A helical transmembrane segment spans residues 179–199 (AMLGVLALPAVLLIILVVFLP). The Cytoplasmic portion of the chain corresponds to 200–257 (NSPRWLAEKGRHIEAEEVLRMLRDTSEKAREELNEIRESLKLKQGGWALFKINRNVRR). Residues 258 to 278 (AVFLGMLLQAMQQFTGMNIIM) traverse the membrane as a helical segment. The Periplasmic portion of the chain corresponds to 279-297 (YYAPRIFKMAGFTTTEQQM). Residues 298 to 318 (IATLVVGLTFMFATFIAVFTV) form a helical membrane-spanning segment. Topologically, residues 319 to 325 (DKAGRKP) are cytoplasmic. The helical transmembrane segment at 326-346 (ALKIGFSVMALGTLVLGYCLM) threads the bilayer. At 347 to 361 (QFDNGTASSGLSWLS) the chain is on the periplasmic side. A helical transmembrane segment spans residues 362–382 (VGMTMMCIAGYAMSAAPVVWI). At 383-404 (LCSEIQPLKCRDFGITCSTTTN) the chain is on the cytoplasmic side. Helical transmembrane passes span 405-425 (WVSN…IGAA) and 426-446 (GTFW…FWLI). Over 447–472 (PETKNVTLEHIERKLMAGEKLRNIGV) the chain is Cytoplasmic.

Belongs to the major facilitator superfamily. Sugar transporter (TC 2.A.1.1) family.

It localises to the cell inner membrane. It catalyses the reaction L-arabinose(in) + H(+)(in) = L-arabinose(out) + H(+)(out). Uptake of L-arabinose across the cytoplasmic membrane with the concomitant transport of protons into the cell (symport system). The sequence is that of Arabinose-proton symporter (araE) from Escherichia coli O157:H7.